The following is an 81-amino-acid chain: Antitoxin VapB20 (81 aa).

Its function is as follows. Antitoxin component of a type II toxin-antitoxin (TA) system. Neutralizes the toxic effect of cognate toxin VapC20. The chain is Antitoxin VapB20 (vapB20) from Mycobacterium tuberculosis (strain CDC 1551 / Oshkosh).